The sequence spans 505 residues: Cytochrome P450 monooxygenase efuB (505 aa).

The helical transmembrane segment at 12-34 (GFWPTVAGTVATYLFYQIVATVY) threads the bilayer. Residue Cys-450 participates in heme binding.

Belongs to the cytochrome P450 family. The cofactor is heme.

It is found in the membrane. Its pathway is secondary metabolite biosynthesis; terpenoid biosynthesis. Cytochrome P450 monooxygenase; part of the gene cluster that mediates the biosynthesis of enfumafungin, a glycosylated fernene-type triterpenoid with potent antifungal activity, mediated by its interaction with beta-1,3-glucan synthase and the fungal cell wall. The pathway begins with the terpene cyclase-glycosyl transferase fusion protein that most likely uses 2,3-oxidosqualene as substrate and catalyzes glycosylation immediately after cyclization. The fernene glycoside then could be processed by the desaturase efuI which catalyzes isomerization of a double bond established by efuA to form the core structure. The latter would then undergo a series of hydroxylations in unknown order at C-2, C-19, C-23 and C-25, which would be catalyzed by two of the three cytochrome P450 monooxygenases efuB, efuG or efuH. The hydroxy-group at C-25 becomes oxidized by the dehydrogenase efuE to enable a spontaneous, non-enzymatic hemiacetal formation with C-23. After hydroxylation at C-2, acetylation by the acetyltransferase efuC takes place. The final steps in enfumafungin biosynthesis require expansion of the 5-membered ring by lactonization via a Baeyer-Villiger reaction mediated by one of the BGC's cytochrome P450 monooxygenases (efuB, efuG or efuH) followed by ring cleavage. This type of reaction would establish a double bond between C-20 and C-21 which could be reduced by the reductase efuL to form the final product. In Hormonema carpetanum, this protein is Cytochrome P450 monooxygenase efuB.